The chain runs to 1085 residues: Protein CROWDED NUCLEI 3 (1085 aa).

Coiled coils occupy residues 51–149 and 185–695; these read DEAS…NDLK and RERA…LDVL. Lys-318 participates in a covalent cross-link: Glycyl lysine isopeptide (Lys-Gly) (interchain with G-Cter in ubiquitin). The Nuclear localization signal signature appears at 404–411; sequence AKREAALE. A Glycyl lysine isopeptide (Lys-Gly) (interchain with G-Cter in ubiquitin) cross-link involves residue Lys-661. A phosphoserine mark is found at Ser-764, Ser-787, Ser-825, and Ser-843. Disordered regions lie at residues 801 to 997 and 1020 to 1077; these read TVKL…GKAE and NNTG…SIGK. Residues 813 to 825 are compositionally biased toward basic and acidic residues; it reads SLDRVSGEDHEPS. Residues 854–868 show a composition bias toward basic residues; it reads RRGRGRGRGRGKSVR. Positions 877–897 are enriched in basic and acidic residues; sequence VSRDSKPSDGETPRKRQREQT. Ser-910 is subject to Phosphoserine. Polar residues predominate over residues 932–941; the sequence is VSQTPGQTRY. The span at 949–995 shows a compositional bias: basic and acidic residues; that stretch reads VGTEEDKAQASKGATEKQERVNDDIRKVPSPKETRTPPEGENRENGK. The segment covering 1045–1066 has biased composition (acidic residues); that stretch reads EEDDENISMIEEENEGEEEEET.

It belongs to the CRWN family. Core component of the LINC complex which is composed of inner nuclear membrane SUN domain-containing proteins coupled to outer nuclear membrane WIP proteins, the nucleoskeletal CRWN/LINC proteins, and, possibly, KAKU4. Expressed at low levels in roots, leaves, flowers and flower stalks.

It localises to the nucleus membrane. The protein resides in the nucleus. Its subcellular location is the nucleoplasm. It is found in the cytoplasm. The protein localises to the nucleus lamina. Functionally, component of SUN-protein-containing multivariate complexes also called LINC complexes which link the nucleoskeleton and cytoskeleton by providing versatile outer nuclear membrane attachment sites for cytoskeletal filaments. Required for nucleus structure organization (e.g. size and shape). This is Protein CROWDED NUCLEI 3 from Arabidopsis thaliana (Mouse-ear cress).